Here is a 161-residue protein sequence, read N- to C-terminus: MVAVYPGSFDPITLGHVDIIKRALSIFDELVVLITENPRKRCLFSLEERRKLVESALKNVDRVRIDVHRGLLVNYLKEHGIKVLVRGLRAVTDYEYELQMALANKKLYGELETVFLTASEEFSFVSSSLVKEVAMYGGDVTEWVTPEVARALYEKLKEGKR.

Substrate is bound at residue Ser8. ATP is bound by residues 8 to 9 (SF) and His16. Substrate is bound by residues Lys40, Leu72, and Arg86. ATP-binding positions include 87–89 (GLR), Glu97, and 122–128 (FSFVSSS).

The protein belongs to the bacterial CoaD family. In terms of assembly, homohexamer. Requires Mg(2+) as cofactor.

It localises to the cytoplasm. The enzyme catalyses (R)-4'-phosphopantetheine + ATP + H(+) = 3'-dephospho-CoA + diphosphate. Its pathway is cofactor biosynthesis; coenzyme A biosynthesis; CoA from (R)-pantothenate: step 4/5. In terms of biological role, reversibly transfers an adenylyl group from ATP to 4'-phosphopantetheine, yielding dephospho-CoA (dPCoA) and pyrophosphate. The chain is Phosphopantetheine adenylyltransferase from Thermotoga neapolitana (strain ATCC 49049 / DSM 4359 / NBRC 107923 / NS-E).